The primary structure comprises 324 residues: Acetaldehyde dehydrogenase 1 (324 aa).

Residue 18-21 (SGNI) coordinates NAD(+). C136 functions as the Acyl-thioester intermediate in the catalytic mechanism. NAD(+)-binding positions include 167–175 (SAGPGTRAN) and N297.

This sequence belongs to the acetaldehyde dehydrogenase family.

It carries out the reaction acetaldehyde + NAD(+) + CoA = acetyl-CoA + NADH + H(+). This chain is Acetaldehyde dehydrogenase 1, found in Parafrankia sp. (strain EAN1pec).